A 265-amino-acid polypeptide reads, in one-letter code: 3-methyl-2-oxobutanoate hydroxymethyltransferase (265 aa).

The Mg(2+) site is built by D45 and D84. Residues 45–46 (DS), D84, and K112 contribute to the 3-methyl-2-oxobutanoate site. E114 contacts Mg(2+). The active-site Proton acceptor is E181.

The protein belongs to the PanB family. In terms of assembly, homodecamer; pentamer of dimers. Mg(2+) is required as a cofactor.

The protein localises to the cytoplasm. It catalyses the reaction 3-methyl-2-oxobutanoate + (6R)-5,10-methylene-5,6,7,8-tetrahydrofolate + H2O = 2-dehydropantoate + (6S)-5,6,7,8-tetrahydrofolate. It functions in the pathway cofactor biosynthesis; (R)-pantothenate biosynthesis; (R)-pantoate from 3-methyl-2-oxobutanoate: step 1/2. Catalyzes the reversible reaction in which hydroxymethyl group from 5,10-methylenetetrahydrofolate is transferred onto alpha-ketoisovalerate to form ketopantoate. The chain is 3-methyl-2-oxobutanoate hydroxymethyltransferase from Pseudoalteromonas atlantica (strain T6c / ATCC BAA-1087).